A 471-amino-acid chain; its full sequence is GDP-mannose transporter (471 aa).

A compositionally biased stretch (polar residues) spans 1–13; sequence MSSGSRSFFTPQE. The disordered stretch occupies residues 1–52; it reads MSSGSRSFFTPQETRLELPQGAAHQTPDITRPASPSENDRAPFLNGGPSDAR. Topologically, residues 1–70 are cytoplasmic; the sequence is MSSGSRSFFT…ALRNDSEKPA (70 aa). The helical transmembrane segment at 71 to 91 threads the bilayer; it reads VGIMALAPILCYCAASITMTV. The Lumenal segment spans residues 92 to 101; it reads VNKFTVSGRG. The chain crosses the membrane as a helical span at residues 102-122; sequence FNMNLLVLLIQSTVGVTCVWI. The Cytoplasmic portion of the chain corresponds to 123–139; that stretch reads AERAGLIQLRGLNAKDA. A helical transmembrane segment spans residues 140 to 160; it reads WNWMPLSIMLVFVIWTGSKAL. The Lumenal portion of the chain corresponds to 161–166; the sequence is QYLNIS. N-linked (GlcNAc...) asparagine glycosylation is present at N164. The chain crosses the membrane as a helical span at residues 167–187; the sequence is VYTIFKNLTIILIAYGEVMWF. Residues 188–193 lie on the Cytoplasmic side of the membrane; sequence GGRVTR. The chain crosses the membrane as a helical span at residues 194–214; that stretch reads IVLCSFLFMVLSSVIAAWSDI. The Lumenal portion of the chain corresponds to 215–279; it reads SNVFAIGNLS…DVIEGFQGYG (65 aa). An N-linked (GlcNAc...) asparagine glycan is attached at N222. Residues 280–300 form a helical membrane-spanning segment; that stretch reads LLSSGYVWMALNCICSATYVL. The Cytoplasmic segment spans residues 301–315; it reads LMRKRIKVTGFKDWD. The helical transmembrane segment at 316–336 threads the bilayer; it reads TMFYNNFLSIPVLLLMSFLVE. The Lumenal segment spans residues 337–354; sequence DWSYANLHKNFPDDKQTK. A helical transmembrane segment spans residues 355 to 375; the sequence is LISAIVFSGACAILISYTTAW. Residues 376–383 lie on the Cytoplasmic side of the membrane; the sequence is CIRATSST. Residues 384 to 404 form a helical membrane-spanning segment; that stretch reads TYSMVGALNKLPVALSGMVFF. Topologically, residues 405–408 are lumenal; sequence HDPP. A helical transmembrane segment spans residues 409-429; sequence VTFSSVSAIAVGFFAGLVYAF. Over 430–471 the chain is Cytoplasmic; it reads GKNKQAEAAKLGGHASANGSSSMSGSKDGSSLPMHTFNDRKD. Low complexity predominate over residues 442–460; the sequence is GHASANGSSSMSGSKDGSS. The tract at residues 442–471 is disordered; that stretch reads GHASANGSSSMSGSKDGSSLPMHTFNDRKD.

This sequence belongs to the TPT transporter family. SLC35D subfamily. Homooligomer.

It is found in the golgi apparatus membrane. Its subcellular location is the cytoplasmic vesicle membrane. The protein localises to the endoplasmic reticulum membrane. Involved in the import of GDP-mannose from the cytoplasm into the Golgi lumen. This chain is GDP-mannose transporter (VRG4), found in Mycosarcoma maydis (Corn smut fungus).